A 940-amino-acid chain; its full sequence is MAFNKLESSNNQEIISEEVGILKELLDDATRGMAGEQGLTTIQHLVELYDEGDYEALTQAISEMTNDDMVFASRYFSLLPLLINISEDVDLAYEVNRKNNIDESYLGKLSETFDVVAESDNARDILENVNVVPVLTAHPTQVQRKTMLELTNHIHELLRKHRDVKDGLINKDKWYADLRRYVEIMMKTDIIREKKLKVKNEITNVMEYYNSSLIKAITKLSHEFKRLAVEKGIELDNPTPITMGMWIGGDRDGNPFVTAETLKLSATLQSEVILNYYIEKVDNLYRSFSLSSRLTEVSETVAEMAKLSPDTSVYRENEPYRRAFSYIQSKLIQTLLFFKAGNFSNERAAKRLSENVRLGSVSTGEVVADFVHDRLSQSLQAVSQQTTEFYETAEAFHDDLLAIKNSLLENDDSVLISGDFEELLQAVEVFGFYLATIDMRQDSSVHEACVAELLKSANIVDNYSELTEVEKVAVLLKELQEDPRTLSSTNVSKSETLEKELAIFRTARLLKDYLGEEVIKQHIISHTESVSDMFELAILLKEVGLVDTERARVQIVPLFETIEDLENSNEIMKQYLGYDIVKRWIKNSNNYQEIMLGYSDSNKDGGYLSSGWTLYKAQNELTNIGEERGIKITFFHGRGGTVGRGGGPSYDAITSQPFGTIKDRIRLTEQGEVIGNKYGNKDAAYYNLEMLVSATLDRMVTRQITDPDELVDFREIMDSIVQDSNRIYRDLVFGNEHFYDYFFEASPIKEVSSLNIGSRPAARKTITDISGLRAIPWVFSWSQNRIMLPGWYGVGSAFNHYIEAEEGNLEKLQHMFETWPFFRSLLSNVDMVLSKSDMNIAFHYAQLAESEEVRSVFNIILDEWQLTKNVILAIEKHDDFLEESPSLKASLGFRLPYFNVLNYIQIELIKRLRNNNLTDDEISLIHITINGIATGLRNSG.

Active-site residues include H138 and K603.

The protein belongs to the PEPCase type 1 family. Mg(2+) serves as cofactor.

The enzyme catalyses oxaloacetate + phosphate = phosphoenolpyruvate + hydrogencarbonate. Functionally, forms oxaloacetate, a four-carbon dicarboxylic acid source for the tricarboxylic acid cycle. The chain is Phosphoenolpyruvate carboxylase from Streptococcus thermophilus (strain CNRZ 1066).